Reading from the N-terminus, the 279-residue chain is Ribosomal RNA small subunit methyltransferase A (279 aa).

H11, L13, G42, E63, D88, and N104 together coordinate S-adenosyl-L-methionine.

Belongs to the class I-like SAM-binding methyltransferase superfamily. rRNA adenine N(6)-methyltransferase family. RsmA subfamily.

The protein localises to the cytoplasm. The catalysed reaction is adenosine(1518)/adenosine(1519) in 16S rRNA + 4 S-adenosyl-L-methionine = N(6)-dimethyladenosine(1518)/N(6)-dimethyladenosine(1519) in 16S rRNA + 4 S-adenosyl-L-homocysteine + 4 H(+). Its function is as follows. Specifically dimethylates two adjacent adenosines (A1518 and A1519) in the loop of a conserved hairpin near the 3'-end of 16S rRNA in the 30S particle. May play a critical role in biogenesis of 30S subunits. This chain is Ribosomal RNA small subunit methyltransferase A, found in Synechococcus sp. (strain JA-3-3Ab) (Cyanobacteria bacterium Yellowstone A-Prime).